The following is a 72-amino-acid chain: Large ribosomal subunit protein uL30 (72 aa).

This sequence belongs to the universal ribosomal protein uL30 family. In terms of assembly, part of the 50S ribosomal subunit.

The polypeptide is Large ribosomal subunit protein uL30 (Mycobacterium ulcerans (strain Agy99)).